Here is a 176-residue protein sequence, read N- to C-terminus: Large ribosomal subunit protein uL6 (176 aa).

Belongs to the universal ribosomal protein uL6 family. As to quaternary structure, part of the 50S ribosomal subunit.

Its function is as follows. This protein binds to the 23S rRNA, and is important in its secondary structure. It is located near the subunit interface in the base of the L7/L12 stalk, and near the tRNA binding site of the peptidyltransferase center. The sequence is that of Large ribosomal subunit protein uL6 from Burkholderia cenocepacia (strain HI2424).